Here is a 373-residue protein sequence, read N- to C-terminus: MTGNDILLWDETLFKDLSVLEPDYLPEYFPHRDSQLNALRFALRPSLRGMRPLNCLLVGPPGTGKTSAVMKVFREVEVHAPGVVAVKVNCQIDSTRFAVISRIYRQLFGISPPNSGIAFRKLFETVVNFLVSSEKVLIVALDDLNYLCCEGHANEVMYSLLRAHEQYPGAKIGVIGIVNDASDLYCLDSRVNSVFLPEEISFLRYGEAEILDILKDRVKYGFYPKVISDDVLELVVSYVEKTGDLRVGIDLLRRSGFNAERRGSRTISSGDVEKAYEASKLLHLCRGISLLSDSEKQLLELIAKADDVKAGELYKSFHELTQLGYTRFYGMVNRLQTLNYVDADFTGKGKRGRTRIIKAKYEAEDILNCLKKG.

ATP contacts are provided by residues 63 to 67 (TGKTS), Tyr-205, and Arg-217.

The protein belongs to the CDC6/cdc18 family.

In terms of biological role, involved in regulation of DNA replication. This chain is ORC1-type DNA replication protein 2 (cdc6-2), found in Methanosarcina acetivorans (strain ATCC 35395 / DSM 2834 / JCM 12185 / C2A).